Consider the following 639-residue polypeptide: Coiled-coil domain-containing protein 27 (639 aa).

The segment at tyrosine 154–serine 176 is disordered. Positions glutamine 203–threonine 242 form a coiled coil. The segment at glutamate 291–serine 385 is disordered. Positions serine 292–serine 309 are enriched in basic and acidic residues. The span at glutamate 310 to lysine 320 shows a compositional bias: low complexity. 2 stretches are compositionally biased toward acidic residues: residues glycine 336–glycine 350 and glutamate 358–serine 369. The span at tryptophan 370–proline 380 shows a compositional bias: basic and acidic residues.

The polypeptide is Coiled-coil domain-containing protein 27 (Ccdc27) (Mus musculus (Mouse)).